The following is a 306-amino-acid chain: Porphobilinogen deaminase (306 aa).

An S-(dipyrrolylmethanemethyl)cysteine modification is found at Cys239.

It belongs to the HMBS family. Monomer. Dipyrromethane serves as cofactor.

It catalyses the reaction 4 porphobilinogen + H2O = hydroxymethylbilane + 4 NH4(+). It participates in porphyrin-containing compound metabolism; protoporphyrin-IX biosynthesis; coproporphyrinogen-III from 5-aminolevulinate: step 2/4. In terms of biological role, tetrapolymerization of the monopyrrole PBG into the hydroxymethylbilane pre-uroporphyrinogen in several discrete steps. This Helicobacter pylori (strain ATCC 700392 / 26695) (Campylobacter pylori) protein is Porphobilinogen deaminase (hemC).